Reading from the N-terminus, the 217-residue chain is FMN-dependent NADH:quinone oxidoreductase (217 aa).

FMN-binding positions include S10, 17–19 (SAS), and 137–140 (SRGG).

The protein belongs to the azoreductase type 1 family. As to quaternary structure, homodimer. It depends on FMN as a cofactor.

It carries out the reaction 2 a quinone + NADH + H(+) = 2 a 1,4-benzosemiquinone + NAD(+). The enzyme catalyses N,N-dimethyl-1,4-phenylenediamine + anthranilate + 2 NAD(+) = 2-(4-dimethylaminophenyl)diazenylbenzoate + 2 NADH + 2 H(+). Its function is as follows. Quinone reductase that provides resistance to thiol-specific stress caused by electrophilic quinones. Also exhibits azoreductase activity. Catalyzes the reductive cleavage of the azo bond in aromatic azo compounds to the corresponding amines. The protein is FMN-dependent NADH:quinone oxidoreductase of Streptomyces avermitilis (strain ATCC 31267 / DSM 46492 / JCM 5070 / NBRC 14893 / NCIMB 12804 / NRRL 8165 / MA-4680).